A 259-amino-acid polypeptide reads, in one-letter code: PF03932 family protein CutC (259 aa).

It belongs to the CutC family. As to quaternary structure, homodimer.

The protein localises to the cytoplasm. The chain is PF03932 family protein CutC from Salmonella typhi.